An 884-amino-acid polypeptide reads, in one-letter code: Valine--tRNA ligase (884 aa).

A 'HIGH' region motif is present at residues 43-53 (PNVTGSLHIGH). The short motif at 530-534 (KMSKS) is the 'KMSKS' region element. Lysine 533 lines the ATP pocket. A coiled-coil region spans residues 817–884 (VIDLDAERGR…KLKAALERLM (68 aa)).

The protein belongs to the class-I aminoacyl-tRNA synthetase family. ValS type 1 subfamily. In terms of assembly, monomer.

Its subcellular location is the cytoplasm. The enzyme catalyses tRNA(Val) + L-valine + ATP = L-valyl-tRNA(Val) + AMP + diphosphate. Catalyzes the attachment of valine to tRNA(Val). As ValRS can inadvertently accommodate and process structurally similar amino acids such as threonine, to avoid such errors, it has a 'posttransfer' editing activity that hydrolyzes mischarged Thr-tRNA(Val) in a tRNA-dependent manner. This chain is Valine--tRNA ligase, found in Zymomonas mobilis subsp. mobilis (strain ATCC 31821 / ZM4 / CP4).